We begin with the raw amino-acid sequence, 213 residues long: Glycerol-3-phosphate acyltransferase (213 aa).

The next 5 membrane-spanning stretches (helical) occupy residues 3 to 23, 51 to 71, 78 to 98, 115 to 135, and 140 to 160; these read ILLA…VVVS, KAAI…VWLA, DVAI…PVFF, AVHP…AFFF, and LAAL…FGMP.

It belongs to the PlsY family. Probably interacts with PlsX.

The protein localises to the cell inner membrane. It catalyses the reaction an acyl phosphate + sn-glycerol 3-phosphate = a 1-acyl-sn-glycero-3-phosphate + phosphate. The protein operates within lipid metabolism; phospholipid metabolism. In terms of biological role, catalyzes the transfer of an acyl group from acyl-phosphate (acyl-PO(4)) to glycerol-3-phosphate (G3P) to form lysophosphatidic acid (LPA). This enzyme utilizes acyl-phosphate as fatty acyl donor, but not acyl-CoA or acyl-ACP. The polypeptide is Glycerol-3-phosphate acyltransferase (Burkholderia cenocepacia (strain HI2424)).